The sequence spans 345 residues: UDP-N-acetylenolpyruvoylglucosamine reductase (345 aa).

Residues valine 16–lysine 185 enclose the FAD-binding PCMH-type domain. Residue arginine 162 is part of the active site. Serine 231 functions as the Proton donor in the catalytic mechanism. Residue glutamate 328 is part of the active site.

This sequence belongs to the MurB family. FAD serves as cofactor.

Its subcellular location is the cytoplasm. The enzyme catalyses UDP-N-acetyl-alpha-D-muramate + NADP(+) = UDP-N-acetyl-3-O-(1-carboxyvinyl)-alpha-D-glucosamine + NADPH + H(+). The protein operates within cell wall biogenesis; peptidoglycan biosynthesis. Its function is as follows. Cell wall formation. This chain is UDP-N-acetylenolpyruvoylglucosamine reductase, found in Blochmanniella pennsylvanica (strain BPEN).